We begin with the raw amino-acid sequence, 158 residues long: MRKQVEIFTDGSCLGNPGPGGYGAILRYKQHERTFSAGYRLTTNNRMELMAAIVSLEALREHCIVTLSTDSQYVRQGITQWIHNWKKRGWKTAEKKPVKNVDLWQRLDAALSQHEIKWEWVKGHAGHPENERCDELARAAAMAPTLEDTGYQPEATAS.

Residues 1–142 (MRKQVEIFTD…CDELARAAAM (142 aa)) enclose the RNase H type-1 domain. The Mg(2+) site is built by aspartate 10, glutamate 48, aspartate 70, and aspartate 134.

The protein belongs to the RNase H family. In terms of assembly, monomer. Requires Mg(2+) as cofactor.

The protein resides in the cytoplasm. The catalysed reaction is Endonucleolytic cleavage to 5'-phosphomonoester.. In terms of biological role, endonuclease that specifically degrades the RNA of RNA-DNA hybrids. The protein is Ribonuclease H of Cronobacter sakazakii (strain ATCC BAA-894) (Enterobacter sakazakii).